Reading from the N-terminus, the 416-residue chain is Ribulose bisphosphate carboxylase large chain (416 aa).

2 residues coordinate substrate: Asn100 and Thr150. Lys152 acts as the Proton acceptor in catalysis. Lys154 serves as a coordination point for substrate. Mg(2+) is bound by residues Lys178, Asp180, and Glu181. Lys178 bears the N6-carboxylysine mark. Residue His271 is the Proton acceptor of the active site. Substrate-binding residues include Arg272, His304, and Ser356.

This sequence belongs to the RuBisCO large chain family. Type I subfamily. Heterohexadecamer of 8 large chains and 8 small chains; disulfide-linked. The disulfide link is formed within the large subunit homodimers. It depends on Mg(2+) as a cofactor. In terms of processing, the disulfide bond which can form in the large chain dimeric partners within the hexadecamer appears to be associated with oxidative stress and protein turnover.

The protein localises to the plastid. It is found in the chloroplast. The catalysed reaction is 2 (2R)-3-phosphoglycerate + 2 H(+) = D-ribulose 1,5-bisphosphate + CO2 + H2O. The enzyme catalyses D-ribulose 1,5-bisphosphate + O2 = 2-phosphoglycolate + (2R)-3-phosphoglycerate + 2 H(+). RuBisCO catalyzes two reactions: the carboxylation of D-ribulose 1,5-bisphosphate, the primary event in carbon dioxide fixation, as well as the oxidative fragmentation of the pentose substrate in the photorespiration process. Both reactions occur simultaneously and in competition at the same active site. The sequence is that of Ribulose bisphosphate carboxylase large chain (rbcL) from Cheiropleuria bicuspis (Fern).